Consider the following 306-residue polypeptide: Acetyl-coenzyme A carboxylase carboxyl transferase subunit beta (306 aa).

The CoA carboxyltransferase N-terminal domain occupies 25–294 (LWIKDPTSGE…APEPSHAFSK (270 aa)). The interval 287 to 306 (EPSHAFSKDSQTQISKTKAA) is disordered. Positions 294-306 (KDSQTQISKTKAA) are enriched in polar residues.

The protein belongs to the AccD/PCCB family. Acetyl-CoA carboxylase is a heterohexamer composed of biotin carboxyl carrier protein (AccB), biotin carboxylase (AccC) and two subunits each of ACCase subunit alpha (AccA) and ACCase subunit beta (AccD).

The protein localises to the cytoplasm. It carries out the reaction N(6)-carboxybiotinyl-L-lysyl-[protein] + acetyl-CoA = N(6)-biotinyl-L-lysyl-[protein] + malonyl-CoA. It functions in the pathway lipid metabolism; malonyl-CoA biosynthesis; malonyl-CoA from acetyl-CoA: step 1/1. In terms of biological role, component of the acetyl coenzyme A carboxylase (ACC) complex. Biotin carboxylase (BC) catalyzes the carboxylation of biotin on its carrier protein (BCCP) and then the CO(2) group is transferred by the transcarboxylase to acetyl-CoA to form malonyl-CoA. In Bartonella bacilliformis (strain ATCC 35685 / KC583 / Herrer 020/F12,63), this protein is Acetyl-coenzyme A carboxylase carboxyl transferase subunit beta.